The primary structure comprises 216 residues: Probable nicotinate-nucleotide adenylyltransferase (216 aa).

The protein belongs to the NadD family.

The catalysed reaction is nicotinate beta-D-ribonucleotide + ATP + H(+) = deamido-NAD(+) + diphosphate. It functions in the pathway cofactor biosynthesis; NAD(+) biosynthesis; deamido-NAD(+) from nicotinate D-ribonucleotide: step 1/1. Functionally, catalyzes the reversible adenylation of nicotinate mononucleotide (NaMN) to nicotinic acid adenine dinucleotide (NaAD). This is Probable nicotinate-nucleotide adenylyltransferase from Maridesulfovibrio salexigens (strain ATCC 14822 / DSM 2638 / NCIMB 8403 / VKM B-1763) (Desulfovibrio salexigens).